Reading from the N-terminus, the 155-residue chain is SsrA-binding protein (155 aa).

This sequence belongs to the SmpB family.

It is found in the cytoplasm. Functionally, required for rescue of stalled ribosomes mediated by trans-translation. Binds to transfer-messenger RNA (tmRNA), required for stable association of tmRNA with ribosomes. tmRNA and SmpB together mimic tRNA shape, replacing the anticodon stem-loop with SmpB. tmRNA is encoded by the ssrA gene; the 2 termini fold to resemble tRNA(Ala) and it encodes a 'tag peptide', a short internal open reading frame. During trans-translation Ala-aminoacylated tmRNA acts like a tRNA, entering the A-site of stalled ribosomes, displacing the stalled mRNA. The ribosome then switches to translate the ORF on the tmRNA; the nascent peptide is terminated with the 'tag peptide' encoded by the tmRNA and targeted for degradation. The ribosome is freed to recommence translation, which seems to be the essential function of trans-translation. The polypeptide is SsrA-binding protein (Lactococcus lactis subsp. lactis (strain IL1403) (Streptococcus lactis)).